The chain runs to 369 residues: Hsc70-interacting protein (369 aa).

The segment at 38 to 97 is disordered; the sequence is MGGKVPPATQKAKSEENTKEEKPDSKKVEEDLKADEPSSEESDLEIDKEGVIEPDTDAPQ. A compositionally biased stretch (basic and acidic residues) spans 49–73; sequence AKSEENTKEEKPDSKKVEEDLKADE. TPR repeat units follow at residues 114 to 147, 148 to 181, and 182 to 215; these read ANDK…NPRL, AILY…NPDS, and AQPY…DYDE. The segment covering 256–272 has biased composition (basic and acidic residues); sequence KAREEHERAQREEEARR. The segment at 256–300 is disordered; that stretch reads KAREEHERAQREEEARRQSGAQYGSFPGGFPGGMPGNFPGGMPGM. A compositionally biased stretch (gly residues) spans 281–300; sequence FPGGFPGGMPGNFPGGMPGM. One can recognise an STI1 domain in the interval 319–358; the sequence is DPEVLAAMQDPEVMVAFQDVAQNPANMSKYQSNPKVMNLI. A Phosphoserine; by GRK5 modification is found at serine 346. N6-acetyllysine is present on residues lysine 353 and lysine 360.

The protein belongs to the FAM10 family. As to quaternary structure, homotetramer. Interacts with HSC70 as well as DNAJ homologs and HSP90. Interacts (via the C-terminus 303- 319 AA) with GRK5.

The protein localises to the cytoplasm. Its function is as follows. One HIP oligomer binds the ATPase domains of at least two HSC70 molecules dependent on activation of the HSC70 ATPase by HSP40. Stabilizes the ADP state of HSC70 that has a high affinity for substrate protein. Through its own chaperone activity, it may contribute to the interaction of HSC70 with various target proteins. The protein is Hsc70-interacting protein (ST13) of Homo sapiens (Human).